We begin with the raw amino-acid sequence, 424 residues long: 3-isopropylmalate dehydratase large subunit 1 (424 aa).

3 residues coordinate [4Fe-4S] cluster: Cys303, Cys363, and Cys366.

This sequence belongs to the aconitase/IPM isomerase family. LeuC type 2 subfamily. Heterodimer of LeuC and LeuD. Requires [4Fe-4S] cluster as cofactor.

It catalyses the reaction (2R,3S)-3-isopropylmalate = (2S)-2-isopropylmalate. It functions in the pathway amino-acid biosynthesis; L-leucine biosynthesis; L-leucine from 3-methyl-2-oxobutanoate: step 2/4. Its function is as follows. Catalyzes the isomerization between 2-isopropylmalate and 3-isopropylmalate, via the formation of 2-isopropylmaleate. In Pyrococcus furiosus (strain ATCC 43587 / DSM 3638 / JCM 8422 / Vc1), this protein is 3-isopropylmalate dehydratase large subunit 1.